A 467-amino-acid chain; its full sequence is ATP synthase subunit beta (467 aa).

Residue 156–163 (GGAGVGKT) coordinates ATP.

This sequence belongs to the ATPase alpha/beta chains family. F-type ATPases have 2 components, CF(1) - the catalytic core - and CF(0) - the membrane proton channel. CF(1) has five subunits: alpha(3), beta(3), gamma(1), delta(1), epsilon(1). CF(0) has three main subunits: a(1), b(2) and c(9-12). The alpha and beta chains form an alternating ring which encloses part of the gamma chain. CF(1) is attached to CF(0) by a central stalk formed by the gamma and epsilon chains, while a peripheral stalk is formed by the delta and b chains.

It is found in the cell inner membrane. It catalyses the reaction ATP + H2O + 4 H(+)(in) = ADP + phosphate + 5 H(+)(out). In terms of biological role, produces ATP from ADP in the presence of a proton gradient across the membrane. The catalytic sites are hosted primarily by the beta subunits. This chain is ATP synthase subunit beta, found in Ralstonia nicotianae (strain ATCC BAA-1114 / GMI1000) (Ralstonia solanacearum).